The sequence spans 300 residues: MKLKLLLIPLLGSSLLLSACSSATSQVISSLSSAQKYFEANKGELNKKNVINILKDGYNSDPNKTVNALLAGWKYTLMDQKLLERNLDASRFASAFGSTSKKDDITPNISEKSLFLADTFPGISSEIAKVFKVEKQTVSGFSYSWNSPKKFQVNIQIKMDGKIDESSKALIKSFLEGNSSGGKGSNGKNSIDESEYTGEKAKFTGNFIFTYTPPTGGARNFSDKSFDVPTSSINFPANVKIDVTTSHTKLNELLESNEQVKKMKSRQLTGKLFNLLPFFTTLCFNSFSPFTVFAVIFTIV.

The first 19 residues, 1–19 (MKLKLLLIPLLGSSLLLSA), serve as a signal peptide directing secretion. Cys20 carries N-palmitoyl cysteine lipidation. Cys20 carries the S-diacylglycerol cysteine lipid modification.

Belongs to the MG439/MG440 family.

It localises to the cell membrane. This is an uncharacterized protein from Mycoplasma pneumoniae (strain ATCC 29342 / M129 / Subtype 1) (Mycoplasmoides pneumoniae).